Here is a 719-residue protein sequence, read N- to C-terminus: MAEVGEDSGARALLALRSAPCSPVLCAAAAAAAFPATTSPPPPAQPPPGPPALPAEPGPGPVPSTVATATTTAPALVAAAAASVRQSPGPALARLEGREFEFLMRQPSVTIGRNSSQGSVDLSMGLSSFISRRHLQLSFQEPHFYLRCLGKNGVFVDGAFQRRGAPALQLPQQCTFRFPSTAIKIQFTSLYHKEEAPASPLRPLYPQISPLKIHIPEPDLRSLVSPIPSPTGTISVPNSCPASPRGAGSSSYRFVQNVTSDLQLAAEFAAKAASEQQADASGGDSPKDESKPPYSYAQLIVQAISSAQDRQLTLSGIYAHITKHYPYYRTADKGWQNSIRHNLSLNRYFIKVPRSQEEPGKGSFWRIDPASEAKLVEQAFRKRRQRGVSCFRTPFGPLSSRSAPASPTHPGLMSPRSSGLQTPECLSREGSPIPHDPDLGSKLASVPEYRYSQSAPGSPVSAQPVIMAVPPRPSNLVAKPVAYMPASIVTSQQPSGHAIHVVQQAPTVTMVRVVTTSANSANGYILASQGSTGTSHDTAGTAVLDLGNEARGLEEKPTIAFATIPAASRVIQTVASQMAPGVPGHTVTILQPATPVTIGQHHLPVRAVTQNGKHAVPTNSLTGNAYALSSPLQLLAAQASSSTPVVITRVCEVGPEEPAAAVSVAANAAPTPAASTTTSASSSGEPEVKRSRVEEPGGTATTQPTAMAATGPQGPGTGE.

A2 is modified (N-acetylalanine). The interval 2 to 40 is interaction with SIN3A and SIN3B; the sequence is AEVGEDSGARALLALRSAPCSPVLCAAAAAAAFPATTSP. The disordered stretch occupies residues 35–67; the sequence is PATTSPPPPAQPPPGPPALPAEPGPGPVPSTVA. Positions 38–62 are enriched in pro residues; the sequence is TSPPPPAQPPPGPPALPAEPGPGPV. The interval 81 to 406 is required for interaction with FOXO4 and MEF2C; sequence AASVRQSPGP…PLSSRSAPAS (326 aa). S87 bears the Phosphoserine mark. The 53-residue stretch at 109 to 161 folds into the FHA domain; that stretch reads VTIGRNSSQGSVDLSMGLSSFISRRHLQLSFQEPHFYLRCLGKNGVFVDGAFQ. 2 positions are modified to omega-N-methylarginine: R147 and R177. S199, S209, S225, and S229 each carry phosphoserine. Phosphothreonine occurs at positions 231 and 233. S239, S243, S281, and S285 each carry phosphoserine. The segment at residues 291 to 386 is a DNA-binding region (fork-head); the sequence is KPPYSYAQLI…EQAFRKRRQR (96 aa). Positions 399-443 are disordered; that stretch reads SSRSAPASPTHPGLMSPRSSGLQTPECLSREGSPIPHDPDLGSKL. Residues S402 and S406 each carry the phosphoserine modification. T408 carries the phosphothreonine modification. S414 is subject to Phosphoserine. Phosphothreonine is present on T422. Phosphoserine occurs at positions 427, 431, and 445. A compositionally biased stretch (low complexity) spans 665–685; the sequence is AANAAPTPAASTTTSASSSGE. The interval 665–719 is disordered; sequence AANAAPTPAASTTTSASSSGEPEVKRSRVEEPGGTATTQPTAMAATGPQGPGTGE. Residues 686 to 695 show a composition bias toward basic and acidic residues; the sequence is PEVKRSRVEE. Low complexity predominate over residues 696–712; sequence PGGTATTQPTAMAATGP.

In terms of assembly, interacts with SIN3A and SIN3B (via PAH2) to form a complex which represses transcription. Component of SIN3A-, but not SIN3B-, containing multiprotein complexes. Interacts with FOXO4 and MEF2C; both interactions inhibit FOXO4 and MEF2C transactivation activity. Interacts (when phosphorylated) with YWHAE/14-3-3-epsilon; promotes sequestration in the cytoplasm and leads to impaired ability to bind DNA. Interacts with FHL2. Interacts with SRF. Interacts with DVL2 and DVL3; the interaction induces DVL2 nuclear translocation. Interacts with BAP1 (when phosphorylated). Accessory component of the polycomb repressive deubiquitinase (PR-DUB) complex, at least composed of BAP1, one of ASXL1, ASXL2 or (probably) ASXL3 and one of MBD5 or MBD6. The PR-DUB core associates with a number of accessory proteins, including FOXK1, FOXK2, KDM1B, HCFC1 and OGT. Post-translationally, phosphorylation by GSK3 (GSK3A or GSK3B) promotes interaction with YWHAE/14-3-3-epsilon and retention in the cytoplasm. In response to mTORC1 signaling, phosphorylation by GSK3 is prevented, leading to translocation to the nucleus. As to expression, expressed in tissues and cells in which the myoglobin gene is transcriptionally active including cardiac and skeletal myocytes, brain and kidney. In the adult brain, expressed in the piriform cortex and the indusium griseum. In the hippocampus, expression is localized to the dentate gyrus and CA3 area. In the cerebellum, expression is confined to the Purkinje cell layer. Present in neuroretinal cells: expressed in rod bipolar cells, amacrine cells and ganglion cells (at protein level).

The protein resides in the nucleus. It is found in the cytoplasm. Its function is as follows. Transcriptional regulator involved in different processes such as glucose metabolism, aerobic glycolysis, muscle cell differentiation and autophagy. Recognizes and binds the forkhead DNA sequence motif (5'-GTAAACA-3') and can both act as a transcription activator or repressor, depending on the context. Together with FOXK2, acts as a key regulator of metabolic reprogramming towards aerobic glycolysis, a process in which glucose is converted to lactate in the presence of oxygen. Acts by promoting expression of enzymes for glycolysis (such as hexokinase-2 (HK2), phosphofructokinase, pyruvate kinase (PKLR) and lactate dehydrogenase), while suppressing further oxidation of pyruvate in the mitochondria by up-regulating pyruvate dehydrogenase kinases PDK1 and PDK4. Probably plays a role in gluconeogenesis during overnight fasting, when lactate from white adipose tissue and muscle is the main substrate. Involved in mTORC1-mediated metabolic reprogramming: in response to mTORC1 signaling, translocates into the nucleus and regulates the expression of genes associated with glycolysis and downstream anabolic pathways, such as HIF1A, thereby regulating glucose metabolism. Together with FOXK2, acts as a negative regulator of autophagy in skeletal muscle: in response to starvation, enters the nucleus, binds the promoters of autophagy genes and represses their expression, preventing proteolysis of skeletal muscle proteins. Acts as a transcriptional regulator of the myogenic progenitor cell population in skeletal muscle. Binds to the upstream enhancer region (CCAC box) of myoglobin (MB) gene, regulating the myogenic progenitor cell population. Promotes muscle progenitor cell proliferation by repressing the transcriptional activity of FOXO4, thereby inhibiting myogenic differentiation. Involved in remodeling processes of adult muscles that occur in response to physiological stimuli. Required to correct temporal orchestration of molecular and cellular events necessary for muscle repair. Represses myogenic differentiation by inhibiting MEFC activity. Positively regulates Wnt/beta-catenin signaling by translocating DVL into the nucleus. Reduces virus replication, probably by binding the interferon stimulated response element (ISRE) to promote antiviral gene expression. Accessory component of the polycomb repressive deubiquitinase (PR-DUB) complex; recruits the PR-DUB complex to specific FOXK1-bound genes. This is Forkhead box protein K1 from Mus musculus (Mouse).